A 61-amino-acid polypeptide reads, in one-letter code: Small ribosomal subunit protein uS14 (61 aa).

Residues C24, C27, C40, and C43 each contribute to the Zn(2+) site.

It belongs to the universal ribosomal protein uS14 family. Zinc-binding uS14 subfamily. As to quaternary structure, part of the 30S ribosomal subunit. Contacts proteins S3 and S10. Zn(2+) is required as a cofactor.

Binds 16S rRNA, required for the assembly of 30S particles and may also be responsible for determining the conformation of the 16S rRNA at the A site. The sequence is that of Small ribosomal subunit protein uS14 from Deinococcus deserti (strain DSM 17065 / CIP 109153 / LMG 22923 / VCD115).